The following is a 566-amino-acid chain: Interleukin-1 receptor-like 1 (566 aa).

The N-terminal stretch at 1-26 (MIGKWRMGLWALAILTVPMYFIVTEG) is a signal peptide. 3 Ig-like C2-type domains span residues 27–109 (RKTS…LNVT), 120–207 (PDYM…RSFT), and 217–323 (PVIT…VRLR). Residues 27–331 (RKTSWGLENE…LRRKQPIDHQ (305 aa)) lie on the Extracellular side of the membrane. Cys42 and Cys93 are joined by a disulfide. Residues Asn107, Asn146, and Asn194 are each glycosylated (N-linked (GlcNAc...) asparagine). Disulfide bonds link Cys117–Cys157 and Cys139–Cys187. The interval 204 to 216 (RSFTVEEKGFSTF) is flexible linker. Residues Asn225, Asn258, and Asn277 are each glycosylated (N-linked (GlcNAc...) asparagine). 2 disulfide bridges follow: Cys240–Cys307 and Cys243–Cys286. A Glycyl lysine isopeptide (Lys-Gly) (interchain with G-Cter in ubiquitin) cross-link involves residue Lys325. Residues 332–354 (STYYIVAGCSLLLMFINVLVIVL) traverse the membrane as a helical segment. The Cytoplasmic segment spans residues 355 to 566 (KVFWIEVALF…GKVCLDLKHF (212 aa)). The TIR domain maps to 379-539 (KLYDAYIIYP…KFWKHVRYQM (161 aa)). Ser441 is modified (phosphoserine). The active site involves Glu465.

This sequence belongs to the interleukin-1 receptor family. In terms of assembly, interacts with MYD88, IRAK1, IRAK4, and TRAF6. Bound to its ligand IL-33, interacts with IL1RAP to form the minimal interleukin-33 signaling complex with a 1:1:1 stoichiometry. Interacts with KIT (bound to KITLG/SCF). A mast cell-specific KITLG/SCF-induced interleukin-33 signaling complex contains IL1RL1, IL1RAP, KIT and MYD88. Interacts with TMED1. In terms of processing, phosphorylated by GSK3B at Ser-441; leading to proteasomal degradation. Ubiquitinated at Lys-325 in a FBXL19-mediated manner; leading to proteasomal degradation. Ubiquitination by TRAF6 via 'Lys-27'-linked polyubiquitination and deubiquitination by USP38 serves as a critical regulatory mechanism for fine-tuning IL1RL1-mediated inflammatory response. In terms of tissue distribution, isoform A is detected in spleen, lung, bone marrow and lymh node. Isoform B is predominant in fibroblasts.

It localises to the cell membrane. Its subcellular location is the secreted. It carries out the reaction NAD(+) + H2O = ADP-D-ribose + nicotinamide + H(+). Receptor for interleukin-33 (IL-33) which plays crucial roles in innate and adaptive immunity, contributing to tissue homeostasis and responses to environmental stresses together with coreceptor IL1RAP. Its stimulation recruits MYD88, IRAK1, IRAK4, and TRAF6, followed by phosphorylation of MAPK3/ERK1 and/or MAPK1/ERK2, MAPK14, and MAPK8. Possibly involved in helper T-cell function. Upon tissue injury, induces UCP2-dependent mitochondrial rewiring that attenuates the generation of reactive oxygen species and preserves the integrity of Krebs cycle required for persistent production of itaconate and subsequent GATA3-dependent differentiation of inflammation-resolving alternatively activated macrophages. Its function is as follows. Inhibits IL-33 signaling. This Rattus norvegicus (Rat) protein is Interleukin-1 receptor-like 1 (Il1rl1).